We begin with the raw amino-acid sequence, 144 residues long: Giant hemoglobin AIII chain (144 aa).

Residues 2–144 form the Globin domain; that stretch reads ECGPLQRLKV…DVITGGIQGN (143 aa). Histidine 95 contributes to the heme b binding site.

This sequence belongs to the globin family. Giant hemoglobin is composed of four heme-containing chains (AI to AIV), and two linker chains (AV and AVI).

The protein is Giant hemoglobin AIII chain of Lamellibrachia sp. (Deep-sea giant tube worm).